The following is a 209-amino-acid chain: Eukaryotic translation initiation factor 4E (209 aa).

The protein belongs to the eukaryotic initiation factor 4E family. As to quaternary structure, eIF4F is a multi-subunit complex, the composition of which varies with external and internal environmental conditions. It is composed of at least eIF4A, eIF4E and eIF4G. eIF4E is also known to interact with other partners.

In terms of biological role, recognizes and binds the 7-methylguanosine-containing mRNA cap during an early step in the initiation of protein synthesis and facilitates ribosome binding by inducing the unwinding of the mRNAs secondary structures. In Candida glabrata (strain ATCC 2001 / BCRC 20586 / JCM 3761 / NBRC 0622 / NRRL Y-65 / CBS 138) (Yeast), this protein is Eukaryotic translation initiation factor 4E (TIF45).